Reading from the N-terminus, the 445-residue chain is Histidinol dehydrogenase (445 aa).

Residues tyrosine 136, glutamine 200, and asparagine 228 each contribute to the NAD(+) site. Residues threonine 251, glutamine 273, and histidine 276 each contribute to the substrate site. Zn(2+) contacts are provided by glutamine 273 and histidine 276. Active-site proton acceptor residues include glutamate 342 and histidine 343. The substrate site is built by histidine 343, aspartate 376, glutamate 430, and histidine 435. Zn(2+) is bound at residue aspartate 376. A Zn(2+)-binding site is contributed by histidine 435.

The protein belongs to the histidinol dehydrogenase family. Zn(2+) is required as a cofactor.

It carries out the reaction L-histidinol + 2 NAD(+) + H2O = L-histidine + 2 NADH + 3 H(+). The protein operates within amino-acid biosynthesis; L-histidine biosynthesis; L-histidine from 5-phospho-alpha-D-ribose 1-diphosphate: step 9/9. Functionally, catalyzes the sequential NAD-dependent oxidations of L-histidinol to L-histidinaldehyde and then to L-histidine. The chain is Histidinol dehydrogenase (hisD) from Mycolicibacterium smegmatis (Mycobacterium smegmatis).